A 69-amino-acid chain; its full sequence is Neuropeptide-like protein 30 (69 aa).

The first 22 residues, 1–22, serve as a signal peptide directing secretion; that stretch reads MISTSSILILVVLLACFMAASA. 4 positions are modified to tyrosine amide: Tyr-29, Tyr-39, Tyr-46, and Tyr-53. Tryptophan amide is present on residues Trp-58 and Trp-67.

The protein belongs to the YARP (YGGW-amide related peptide) family. Expressed in hypoderm.

The protein resides in the secreted. Functionally, may have antimicrobial activity. May play a role in response to fungal infection. The chain is Neuropeptide-like protein 30 (nlp-30) from Caenorhabditis elegans.